Reading from the N-terminus, the 550-residue chain is Rab GTPase-activating protein 22 (550 aa).

The segment at 1–49 (MKALRRSYTSTSSGNSSSSSSLPSSSSSSLPSSSSSSPPSSNSNSYSNS) is disordered. Positions 7–49 (SYTSTSSGNSSSSSSLPSSSSSSLPSSSSSSPPSSNSNSYSNS) are enriched in low complexity. The 335-residue stretch at 126 to 460 (GVDPSIRAEV…CLWEVMWADQ (335 aa)) folds into the Rab-GAP TBC domain.

In terms of assembly, interacts with AGT1 in peroxisome under biotic stress conditions. In terms of tissue distribution, expressed in root meristems, vascular tissues, guard cells, trichomes, styles and receptacles.

Its subcellular location is the nucleus. It localises to the peroxisome. Its function is as follows. Involved in defense response against fungal and bacterial pathogens. Acts as a negative regulator of jasmonate (JA) responses during infection by the soil-born fungal pathogen Verticillium longisporum. Involved in abscisic acid-dependent stomata closure in response to infection by V.longisporum and Pseudomonas syringae. May be a downstream component of brassinosteroid-mediated signaling. This chain is Rab GTPase-activating protein 22, found in Arabidopsis thaliana (Mouse-ear cress).